We begin with the raw amino-acid sequence, 377 residues long: Dual-specificity RNA methyltransferase RlmN (377 aa).

Glutamate 102 acts as the Proton acceptor in catalysis. Residues 108-345 (EPDRRTLCVS…AVVRKNRGGD (238 aa)) enclose the Radical SAM core domain. Cysteines 115 and 350 form a disulfide. Cysteine 122, cysteine 126, and cysteine 129 together coordinate [4Fe-4S] cluster. Residues 177 to 178 (GE), serine 209, 231 to 233 (SLN), and asparagine 307 contribute to the S-adenosyl-L-methionine site. Cysteine 350 acts as the S-methylcysteine intermediate in catalysis. Residues 354-377 (AAEGGPGDPRRPAPPPLTRLPAAG) form a disordered region.

Belongs to the radical SAM superfamily. RlmN family. The cofactor is [4Fe-4S] cluster.

It localises to the cytoplasm. The enzyme catalyses adenosine(2503) in 23S rRNA + 2 reduced [2Fe-2S]-[ferredoxin] + 2 S-adenosyl-L-methionine = 2-methyladenosine(2503) in 23S rRNA + 5'-deoxyadenosine + L-methionine + 2 oxidized [2Fe-2S]-[ferredoxin] + S-adenosyl-L-homocysteine. It carries out the reaction adenosine(37) in tRNA + 2 reduced [2Fe-2S]-[ferredoxin] + 2 S-adenosyl-L-methionine = 2-methyladenosine(37) in tRNA + 5'-deoxyadenosine + L-methionine + 2 oxidized [2Fe-2S]-[ferredoxin] + S-adenosyl-L-homocysteine. Its function is as follows. Specifically methylates position 2 of adenine 2503 in 23S rRNA and position 2 of adenine 37 in tRNAs. m2A2503 modification seems to play a crucial role in the proofreading step occurring at the peptidyl transferase center and thus would serve to optimize ribosomal fidelity. The protein is Dual-specificity RNA methyltransferase RlmN of Anaeromyxobacter sp. (strain Fw109-5).